Reading from the N-terminus, the 466-residue chain is Adenosylhomocysteinase (466 aa).

Substrate is bound by residues threonine 57, aspartate 132, and glutamate 192. 193–195 (TTT) is a binding site for NAD(+). Lysine 222 and aspartate 226 together coordinate substrate. NAD(+) is bound by residues asparagine 227, 256-261 (GYGDVG), glutamate 279, asparagine 314, 335-337 (IGH), and asparagine 380.

The protein belongs to the adenosylhomocysteinase family. NAD(+) serves as cofactor.

The protein resides in the cytoplasm. It carries out the reaction S-adenosyl-L-homocysteine + H2O = L-homocysteine + adenosine. Its pathway is amino-acid biosynthesis; L-homocysteine biosynthesis; L-homocysteine from S-adenosyl-L-homocysteine: step 1/1. Its function is as follows. May play a key role in the regulation of the intracellular concentration of adenosylhomocysteine. The chain is Adenosylhomocysteinase from Rhizobium leguminosarum bv. trifolii (strain WSM2304).